The chain runs to 952 residues: MAEGGAADLDTQRSDIATLLKTSLRKGDTWYLVDSRWFKQWKKYVGFDSWDKYQMGDQNVYPGPIDNSGLLKDGDAQSLKEHLIDELDYILLPTEGWNKLVSWYTLMEGQEPIARKVVEQGMFVKHCKVEVYLTELKLCENGNMNNVVTRRFSKADTIDTIEKEIRKIFNIPDEKEARLWNKYMSNTFEPLNKPDSTIQDAGLYQGQVLVIEQKNEDGTWPRGPSAPNVKNSNYCLPSYTAYKNYDYSEPGRNNEQPGLCGLSNLGNTCFMNSAIQCLSNTPPLTEYFLNDKYQEELNFDNPLGMRGEIAKSYAELIKQMWSGKFSYVTPRAFKTQVGRFAPQFSGYQQQDCQELLAFLLDGLHEDLNRIRKKPYIQLKDADGRPDKVVAEEAWENHLKRNDSIIVDIFHGLFKSTLVCPECAKISVTFDPFCYLTLPLPMKKERSLEVYLVRMDPLAKPMQYKVIVPKIGNILDLCTALSALSGVPADKMIVTDIYNHRFHRIFAMDENLSSIMERDDIYVFEININRTEDTEHVVIPVCLREKFRHSSYTHHTGSSLFGQPFLMAVPRNNTEDKLYNLLLLRMCRYVKMSTETEETDGPLRCCEDQNINGNGPNGIHEEGSPSEMETDEPDDESSQDQELPSENENSQSEDSVGGDNDSENGLCTEETCKGRLTGHKKRLFTFQFNNLGNTDINYIKDDTRHIRFDDRQLRLDERSFLALDWDPDLKKRYFDENAAEDFEKHESVEYKPPKRPFVKLKDCIELFTTKEKLGAEDPWYCPNCKEHQQATKKLDLWSLPPVLVVHLKRFSYSRYMRDKLDTLVDFPISDLDMSEFLINPNAGPCRYNLIAVSNHYGGMGGGHYTAFAKNKDDGKWYYFDDSSVSSASEDQIVSKAAYVLFYQRQDTFSGTGFFPLDRETKGASAATGVPLESDEDSNDNDNDLENENCMHTN.

N-acetylalanine is present on Ala2. The mediates interaction with SART3 stretch occupies residues 2–223 (AEGGAADLDT…KNEDGTWPRG (222 aa)). The 112-residue stretch at 7–118 (ADLDTQRSDI…GQEPIARKVV (112 aa)) folds into the DUSP domain. The USP domain occupies 260-904 (CGLSNLGNTC…AAYVLFYQRQ (645 aa)). Cys269 functions as the Nucleophile in the catalytic mechanism. A Phosphothreonine modification is found at Thr573. The segment at 597–665 (ETDGPLRCCE…GGDNDSENGL (69 aa)) is disordered. Over residues 627-644 (METDEPDDESSQDQELPS) the composition is skewed to acidic residues. The active-site Proton acceptor is His862. Residues 923–952 (SAATGVPLESDEDSNDNDNDLENENCMHTN) form a disordered region. Acidic residues predominate over residues 931 to 945 (ESDEDSNDNDNDLEN). Phosphoserine is present on residues Ser932 and Ser936.

Belongs to the peptidase C19 family. In terms of assembly, a homodimer structure has been reported; however it is unclear whether the protein form a homodimer in vivo. Identified in a complex with the COP9 signalosome complex (CSN). Interacts with SMAD1, SMAD2 and SMAD3; the interaction is direct. Forms a complex with SMURF2 and SMAD7. Interacts with TGFBR1. Interacts with SART3; the interaction is direct. May interact with RNF20 and RNF40. May interact with PRKN. Interacts with INCA1. Post-translationally, phosphorylated. Phosphorylation protects against ubiquitination and subsequent degradation by the proteasome. In terms of processing, ubiquitinated, leading to degradation by the proteasome. In terms of tissue distribution, highly expressed in testis and spleen, and at lower level in other tissues.

The protein localises to the cytoplasm. It localises to the nucleus. Its subcellular location is the mitochondrion. The catalysed reaction is Thiol-dependent hydrolysis of ester, thioester, amide, peptide and isopeptide bonds formed by the C-terminal Gly of ubiquitin (a 76-residue protein attached to proteins as an intracellular targeting signal).. Functionally, hydrolase that removes conjugated ubiquitin from target proteins and regulates various pathways such as the TGF-beta receptor signaling, NF-kappa-B and RNF41/NRDP1-PRKN pathways. Acts as a key regulator of TGF-beta receptor signaling pathway, but the precise mechanism is still unclear: according to a report, acts by promoting deubiquitination of monoubiquitinated R-SMADs (SMAD1, SMAD2 and/or SMAD3), thereby alleviating inhibition of R-SMADs and promoting activation of TGF-beta target genes. According to another reports, regulates the TGF-beta receptor signaling pathway by mediating deubiquitination and stabilization of TGFBR1, leading to an enhanced TGF-beta signal. Able to mediate deubiquitination of monoubiquitinated substrates, 'Lys-27'-, 'Lys-48'- and 'Lys-63'-linked polyubiquitin chains. May also regulate gene expression and/or DNA repair through the deubiquitination of histone H2B. Acts as an inhibitor of mitophagy by counteracting the action of parkin (PRKN): hydrolyzes cleavage of 'Lys-48'- and 'Lys-63'-linked polyubiquitin chains attached by parkin on target proteins such as MFN2, thereby reducing parkin's ability to drive mitophagy. Acts as an associated component of COP9 signalosome complex (CSN) and regulates different pathways via this association: regulates NF-kappa-B by mediating deubiquitination of NFKBIA and deubiquitinates substrates bound to VCP. Involved in endosome organization by mediating deubiquitination of SQSTM1: ubiquitinated SQSTM1 forms a molecular bridge that restrains cognate vesicles in the perinuclear region and its deubiquitination releases target vesicles for fast transport into the cell periphery. Acts as a negative regulator of antifungal immunity by mediating 'Lys-27'-linked deubiquitination of CARD9, thereby inactivating CARD9. The chain is Ubiquitin carboxyl-terminal hydrolase 15 (Usp15) from Rattus norvegicus (Rat).